A 169-amino-acid polypeptide reads, in one-letter code: Cell division inhibitor SulA (169 aa).

The tract at residues 106 to 112 (ALRTGNY) is ftsZ binding. The interval 162–169 (KIHSNLYH) is lon protease binding.

This sequence belongs to the SulA family. In terms of assembly, interacts with FtsZ. In terms of processing, is rapidly cleaved and degraded by the Lon protease once DNA damage is repaired.

In terms of biological role, component of the SOS system and an inhibitor of cell division. Accumulation of SulA causes rapid cessation of cell division and the appearance of long, non-septate filaments. In the presence of GTP, binds a polymerization-competent form of FtsZ in a 1:1 ratio, thus inhibiting FtsZ polymerization and therefore preventing it from participating in the assembly of the Z ring. This mechanism prevents the premature segregation of damaged DNA to daughter cells during cell division. In Salmonella dublin (strain CT_02021853), this protein is Cell division inhibitor SulA.